The chain runs to 549 residues: Acetyl-coenzyme A transporter 1 (549 aa).

Residues methionine 1 to arginine 12 are compositionally biased toward basic and acidic residues. The interval methionine 1 to glutamate 46 is disordered. Over methionine 1–serine 74 the chain is Cytoplasmic. Phosphoserine occurs at positions 22 and 42. Residues aspartate 36–glutamate 46 show a composition bias toward basic and acidic residues. Residues isoleucine 75–isoleucine 95 traverse the membrane as a helical segment. Topologically, residues proline 96–serine 113 are extracellular. An N-linked (GlcNAc...) asparagine glycan is attached at asparagine 103. A helical transmembrane segment spans residues phenylalanine 114–valine 134. The Cytoplasmic segment spans residues lysine 135–lysine 141. Residues serine 142 to valine 162 traverse the membrane as a helical segment. Residues aspartate 163–aspartate 175 are Extracellular-facing. Residues valine 176–alanine 196 form a helical membrane-spanning segment. The Cytoplasmic segment spans residues valine 197 to asparagine 217. Residues serine 218–alanine 238 traverse the membrane as a helical segment. The Extracellular portion of the chain corresponds to aspartate 239 to threonine 256. Residues leucine 257–leucine 277 traverse the membrane as a helical segment. Residues leucine 278–lysine 299 lie on the Cytoplasmic side of the membrane. A helical transmembrane segment spans residues leucine 300–alanine 320. Over lysine 321–glutamate 343 the chain is Extracellular. A helical membrane pass occupies residues histidine 344–serine 364. Over lysine 365 to lysine 378 the chain is Cytoplasmic. A helical membrane pass occupies residues alanine 379–proline 398. Topologically, residues lysine 399–glycine 404 are extracellular. Residues glycine 405–valine 425 traverse the membrane as a helical segment. Over tyrosine 426–aspartate 508 the chain is Cytoplasmic. Residues glycine 509–glycine 529 form a helical membrane-spanning segment. The Extracellular portion of the chain corresponds to proline 530–asparagine 549.

The protein belongs to the SLC33A transporter family. As to quaternary structure, homodimerizes. As to expression, ubiquitous. Detected in heart, brain, placenta, lung, liver, skeletal muscle, kidney and pancreas. With strongest signals in pancreas.

The protein localises to the endoplasmic reticulum membrane. It catalyses the reaction acetyl-CoA(in) = acetyl-CoA(out). In terms of biological role, acetyl-CoA transporter that mediates active acetyl-CoA import through the endoplasmic reticulum (ER) membrane into the ER lumen where specific ER-based acetyl-CoA:lysine acetyltransferases are responsible for the acetylation of ER-based protein substrates, such as BACE1. Necessary for O-acetylation of gangliosides. This is Acetyl-coenzyme A transporter 1 from Homo sapiens (Human).